Consider the following 108-residue polypeptide: UPF0060 membrane protein Rsph17029_0436 (108 aa).

The next 4 helical transmembrane spans lie at 5–25 (LAAYAGAALAEIAGCFAVWAW), 32–52 (ALWLVPGALSLGAFAWLLALT), 62–82 (AVYGGVYVAASLLWLWAVEGV), and 86–106 (RWDMGGAALVLAGAAVILWAP).

This sequence belongs to the UPF0060 family.

The protein localises to the cell inner membrane. The polypeptide is UPF0060 membrane protein Rsph17029_0436 (Cereibacter sphaeroides (strain ATCC 17029 / ATH 2.4.9) (Rhodobacter sphaeroides)).